The following is a 159-amino-acid chain: Large ribosomal subunit protein uL23m (159 aa).

The protein belongs to the universal ribosomal protein uL23 family. Component of the mitochondrial ribosome large subunit (39S) which comprises a 16S rRNA and about 50 distinct proteins.

It localises to the mitochondrion. The sequence is that of Large ribosomal subunit protein uL23m (mrpl-23) from Caenorhabditis briggsae.